Consider the following 395-residue polypeptide: MAVYCSENFSVYPQPSLHPPGAAAAAAAAAAAAAAAAASSGQRAGGYALGDYGAPANAGYLWGMNSPAPYLQGPPGSGAAASPFLPPASYGCSRGGQLVGSPSGPGSPSAGGAELSWLSLASQEELLKLVRPPYSYSALIAMAIQSAPERKLTLSHIYQYVAENFPFYKRSKAGWQNSIRHNLSLNDCFRKVPRDEDDPGKGNYWTLDPNCEKMFDNGNFRRKRKRRSEPNTPATTAAASSLGGLKAEEERPIPASGKPCGNSPPPELDPSPSARDHPKSSSPSGIISSTPSCLSTFFSGMSSLSGGGSRLTGGLSTDLHHRNFSAGQLSGGTFTPSSSSSQEVPSPEQLQRVAGPSPAYYSSFHPSSGSQGAQYNHYYNFTVNSLIYTRDGTEV.

A DNA-binding region (fork-head) is located at residues 131-225 (RPPYSYSALI…DNGNFRRKRK (95 aa)). Disordered regions lie at residues 216-288 (DNGN…GIIS) and 322-370 (RNFS…SSGS). The short motif at 221-227 (RRKRKRR) is the Nuclear localization signal element. Residues 234–245 (ATTAAASSLGGL) show a composition bias toward low complexity. Positions 325–335 (SAGQLSGGTFT) are enriched in polar residues. Positions 336-349 (PSSSSSQEVPSPEQ) are enriched in low complexity.

As to expression, initially expressed in the pre-placodal ectoderm surrounding the neural plate, which will give rise to all craniofacial sensory organs. Expression then becomes restricted to a region immediately anterior to the first pair of somites that will give rise to the otic and epibranchial placodes, before becoming down-regulated from this region and restricted to the ectoderm and endoderm of the pharyngeal arches.

Its subcellular location is the nucleus. In terms of biological role, transcription factor required for pharyngeal arch development, which is involved in otic placode development. This Gallus gallus (Chicken) protein is Forkhead box protein I3.